A 1456-amino-acid chain; its full sequence is ABC transporter G family member 44 (1456 aa).

In terms of domain architecture, ABC transporter 1 spans 169-442; the sequence is ANLLHVVPNK…FESMGFKCPD (274 aa). 202-209 is an ATP binding site; it reads GPPGSGKT. Positions 520–733 constitute an ABC transmembrane type-2 1 domain; that stretch reads ELLRTCIARE…AMNAIAVNEF (214 aa). The next 6 helical transmembrane spans lie at 538–558, 571–591, 626–646, 658–678, 682–702, and 768–788; these read FVYR…MTLF, GIVY…NGFS, IPIS…VIGF, LLLL…AALG, VVAN…SGFI, and IGVG…TIAL. The disordered stretch occupies residues 812–844; that stretch reads NITGETINDPRNSASSGQTTNTRRNAAPGEASE. The segment covering 814 to 835 has biased composition (polar residues); that stretch reads TGETINDPRNSASSGQTTNTRR. In terms of domain architecture, ABC transporter 2 spans 858-1110; that stretch reads VAFNNIRYSV…DLIEYFEGVE (253 aa). 903 to 910 is a binding site for ATP; the sequence is GVSGAGKT. Positions 1183 to 1397 constitute an ABC transmembrane type-2 2 domain; sequence TQCMACLWKQ…TLYGLVASQF (215 aa). Transmembrane regions (helical) follow at residues 1202 to 1222, 1242 to 1262, 1290 to 1310, 1317 to 1337, 1347 to 1367, 1378 to 1398, and 1425 to 1445; these read YTVV…TIFW, YAAV…VVAV, LPYV…MIGF, FFWY…YGML, IASI…GFVI, WYSW…SQFG, and FLGV…VSFS.

It belongs to the ABC transporter superfamily. ABCG family. PDR (TC 3.A.1.205) subfamily.

It localises to the membrane. Its function is as follows. May be a general defense protein. The sequence is that of ABC transporter G family member 44 from Oryza sativa subsp. japonica (Rice).